The primary structure comprises 109 residues: Large ribosomal subunit protein uL22 (109 aa).

The protein belongs to the universal ribosomal protein uL22 family. As to quaternary structure, part of the 50S ribosomal subunit.

Its function is as follows. This protein binds specifically to 23S rRNA; its binding is stimulated by other ribosomal proteins, e.g. L4, L17, and L20. It is important during the early stages of 50S assembly. It makes multiple contacts with different domains of the 23S rRNA in the assembled 50S subunit and ribosome. In terms of biological role, the globular domain of the protein is located near the polypeptide exit tunnel on the outside of the subunit, while an extended beta-hairpin is found that lines the wall of the exit tunnel in the center of the 70S ribosome. This Herminiimonas arsenicoxydans protein is Large ribosomal subunit protein uL22.